Reading from the N-terminus, the 333-residue chain is Ketol-acid reductoisomerase (NADP(+)) (333 aa).

The region spanning 1 to 171 (MSNDTQPKIA…GGARANIIKT (171 aa)) is the KARI N-terminal Rossmann domain. Residues 14–17 (YGSQ), arginine 37, threonine 42, and 72–75 (DMVQ) each bind NADP(+). Histidine 97 is a catalytic residue. Glycine 123 lines the NADP(+) pocket. The KARI C-terminal knotted domain occupies 172–317 (TFKEETETDL…KKLRAKMVWL (146 aa)). Residues aspartate 180, glutamate 184, glutamate 216, and glutamate 220 each coordinate Mg(2+). Serine 241 is a substrate binding site.

It belongs to the ketol-acid reductoisomerase family. The cofactor is Mg(2+).

The enzyme catalyses (2R)-2,3-dihydroxy-3-methylbutanoate + NADP(+) = (2S)-2-acetolactate + NADPH + H(+). It carries out the reaction (2R,3R)-2,3-dihydroxy-3-methylpentanoate + NADP(+) = (S)-2-ethyl-2-hydroxy-3-oxobutanoate + NADPH + H(+). It participates in amino-acid biosynthesis; L-isoleucine biosynthesis; L-isoleucine from 2-oxobutanoate: step 2/4. The protein operates within amino-acid biosynthesis; L-valine biosynthesis; L-valine from pyruvate: step 2/4. Involved in the biosynthesis of branched-chain amino acids (BCAA). Catalyzes an alkyl-migration followed by a ketol-acid reduction of (S)-2-acetolactate (S2AL) to yield (R)-2,3-dihydroxy-isovalerate. In the isomerase reaction, S2AL is rearranged via a Mg-dependent methyl migration to produce 3-hydroxy-3-methyl-2-ketobutyrate (HMKB). In the reductase reaction, this 2-ketoacid undergoes a metal-dependent reduction by NADPH to yield (R)-2,3-dihydroxy-isovalerate. The polypeptide is Ketol-acid reductoisomerase (NADP(+)) (Xanthomonas euvesicatoria pv. vesicatoria (strain 85-10) (Xanthomonas campestris pv. vesicatoria)).